We begin with the raw amino-acid sequence, 617 residues long: Vacuolar protein sorting-associated protein 33B (617 aa).

Ala2 carries the N-acetylalanine modification.

This sequence belongs to the STXBP/unc-18/SEC1 family. As to quaternary structure, interacts with RAB11A and VIPAS39. Interacts with RAB25. Associates with adapter protein complex 3 (AP-3), clathrin:AP-3 and clathrin:HGS complexes. (Microbial infection) Interacts with M.tuberculosis PtpA. In terms of processing, phosphorylated on tyrosine residues. (Microbial infection) Dephosphorylated by M.tuberculosis PtpA, which induces the reduction of host phagolysosome fusion in M.tuberculosis-infected macrophages. As to expression, ubiquitous; highly expressed in testis and low expression in the lung.

Its subcellular location is the late endosome membrane. The protein localises to the lysosome membrane. It is found in the early endosome. It localises to the cytoplasmic vesicle. The protein resides in the clathrin-coated vesicle. Its subcellular location is the recycling endosome. May play a role in vesicle-mediated protein trafficking to lysosomal compartments and in membrane docking/fusion reactions of late endosomes/lysosomes. Required for proper trafficking and targeting of the collagen-modifying enzyme lysyl hydroxylase 3 (LH3) to intracellular collagen. Mediates phagolysosomal fusion in macrophages. Proposed to be involved in endosomal maturation implicating VIPAS39. In epithelial cells, the VPS33B:VIPAS39 complex may play a role in the apical recycling pathway and in the maintenance of the apical-basolateral polarity. Seems to be involved in the sorting of specific cargos from the trans-Golgi network to alpha-granule-destined multivesicular bodies (MVBs) promoting MVBs maturation in megakaryocytes. This chain is Vacuolar protein sorting-associated protein 33B (VPS33B), found in Homo sapiens (Human).